Here is a 151-residue protein sequence, read N- to C-terminus: 6,7-dimethyl-8-ribityllumazine synthase (151 aa).

5-amino-6-(D-ribitylamino)uracil contacts are provided by residues F15, T47 to E49, and A71 to I73. E76–T77 is a (2S)-2-hydroxy-3-oxobutyl phosphate binding site. H79 functions as the Proton donor in the catalytic mechanism. L104 contributes to the 5-amino-6-(D-ribitylamino)uracil binding site. Residue R119 participates in (2S)-2-hydroxy-3-oxobutyl phosphate binding.

Belongs to the DMRL synthase family.

The enzyme catalyses (2S)-2-hydroxy-3-oxobutyl phosphate + 5-amino-6-(D-ribitylamino)uracil = 6,7-dimethyl-8-(1-D-ribityl)lumazine + phosphate + 2 H2O + H(+). It functions in the pathway cofactor biosynthesis; riboflavin biosynthesis; riboflavin from 2-hydroxy-3-oxobutyl phosphate and 5-amino-6-(D-ribitylamino)uracil: step 1/2. Catalyzes the formation of 6,7-dimethyl-8-ribityllumazine by condensation of 5-amino-6-(D-ribitylamino)uracil with 3,4-dihydroxy-2-butanone 4-phosphate. This is the penultimate step in the biosynthesis of riboflavin. The chain is 6,7-dimethyl-8-ribityllumazine synthase from Metallosphaera sedula (strain ATCC 51363 / DSM 5348 / JCM 9185 / NBRC 15509 / TH2).